Consider the following 296-residue polypeptide: MNPKSPLFLRLSDRLDVYLRLMRADKPIGTLLLLWPTYWALWLASDGIPDLAVLAAFTIGTFLMRSAGCVINDFADRDFDGAVERTKNRPFAQGRVKKKEALLLTAFLCLLAALCLIPLNHLTWLMSLPALFLALTYPFTKRFFPIPQLYLGLAFSFGIPMAFAAVGNSVPVEAWILFTANVLWTLAYDTVYAMADKEDDLKIGIKTSAVTFGRYDIAAVMLCHGGFTLLMAVLGAVIGAAWAYWTAIPIVLLLQYRQYAAIKSRVRQICFETFLANNRIGWVWFTAIFAHTFFAK.

Transmembrane regions (helical) follow at residues 28–48 (IGTL…SDGI), 51–71 (LAVL…GCVI), 102–122 (LLLT…LNHL), 143–163 (FFPI…PMAF), 174–194 (AWIL…VYAM), 212–232 (FGRY…LLMA), 233–253 (VLGA…IVLL), and 274–294 (FLAN…HTFF).

The protein belongs to the UbiA prenyltransferase family. Requires Mg(2+) as cofactor.

Its subcellular location is the cell inner membrane. It catalyses the reaction all-trans-octaprenyl diphosphate + 4-hydroxybenzoate = 4-hydroxy-3-(all-trans-octaprenyl)benzoate + diphosphate. The protein operates within cofactor biosynthesis; ubiquinone biosynthesis. Functionally, catalyzes the prenylation of para-hydroxybenzoate (PHB) with an all-trans polyprenyl group. Mediates the second step in the final reaction sequence of ubiquinone-8 (UQ-8) biosynthesis, which is the condensation of the polyisoprenoid side chain with PHB, generating the first membrane-bound Q intermediate 3-octaprenyl-4-hydroxybenzoate. This Neisseria meningitidis serogroup C (strain 053442) protein is 4-hydroxybenzoate octaprenyltransferase.